The following is a 465-amino-acid chain: MTAQDYVVKDIALAAYGRKELDIAETEMPGLMACREEFSSSQPLRGARISGSLHMTIQTAVLIETLKAIGANVRWSSSNIFSTQDHAAAAIAATGTPVFAVKGETLEEYWTYIDAIFQWPDGNPSNLILDDGADATNYILMGSRAETNKDILSHPKTEEEELFFKQIQRRMEATPGFFTRQRAAIKGISEETTTGVHRLHQLQKEGLLPFPAININDSVTKSKFDNKYGCRESLVDGIRRATDVMIAGKTAIVCGYGDVGKGSAASLSGAGARVKVTEIDPICALQAAMDGYEVVNLDDAASSADIIITTTGNKDIVRLDHMRKVKDMCILGNIGHFDNEIQVAALQNLPWTNIKPQVDMITFPDGKRIILLSEGRLLNLGNATGHPSFVMSASFTNQVLAQIELFTRSGHYKNEVTVLPKYLDEKVARLHLDQLGIKLTTLSQEQAAYIGVTPQGPYKPDHYRY.

The substrate site is built by Thr-56, Asp-131, and Glu-191. Position 192-194 (192-194 (TTT)) interacts with NAD(+). Substrate is bound by residues Lys-221 and Asp-225. NAD(+) contacts are provided by residues Asn-226, 255–260 (GYGDVG), Glu-278, Asn-313, 334–336 (IGH), and Asn-379.

It belongs to the adenosylhomocysteinase family. The cofactor is NAD(+).

Its subcellular location is the cytoplasm. It catalyses the reaction S-adenosyl-L-homocysteine + H2O = L-homocysteine + adenosine. It participates in amino-acid biosynthesis; L-homocysteine biosynthesis; L-homocysteine from S-adenosyl-L-homocysteine: step 1/1. In terms of biological role, may play a key role in the regulation of the intracellular concentration of adenosylhomocysteine. The sequence is that of Adenosylhomocysteinase from Bartonella henselae (strain ATCC 49882 / DSM 28221 / CCUG 30454 / Houston 1) (Rochalimaea henselae).